Consider the following 93-residue polypeptide: Acylphosphatase (93 aa).

The 87-residue stretch at 7 to 93 folds into the Acylphosphatase-like domain; the sequence is RLTAWVHGWV…TEQITGFSER (87 aa). Residues Arg-22 and Asn-40 contribute to the active site.

It belongs to the acylphosphatase family.

The enzyme catalyses an acyl phosphate + H2O = a carboxylate + phosphate + H(+). This is Acylphosphatase (acyP) from Mycobacterium tuberculosis (strain ATCC 25177 / H37Ra).